Reading from the N-terminus, the 64-residue chain is Large ribosomal subunit protein bL35 (64 aa).

The protein belongs to the bacterial ribosomal protein bL35 family.

The sequence is that of Large ribosomal subunit protein bL35 from Desulforamulus reducens (strain ATCC BAA-1160 / DSM 100696 / MI-1) (Desulfotomaculum reducens).